A 129-amino-acid polypeptide reads, in one-letter code: Large-conductance mechanosensitive channel (129 aa).

Transmembrane regions (helical) follow at residues 8–28 (FIMR…AAFT), 30–50 (IVKS…AGAV), and 67–87 (GAVL…FLII).

It belongs to the MscL family. Homopentamer.

The protein localises to the cell membrane. Channel that opens in response to stretch forces in the membrane lipid bilayer. May participate in the regulation of osmotic pressure changes within the cell. The protein is Large-conductance mechanosensitive channel of Oenococcus oeni (strain ATCC BAA-331 / PSU-1).